The sequence spans 276 residues: MELYQGVVLGVLQGLTEFLPVSSSGHLVLGQNFFGITEPALSFDISVHLGTLFAVALVFFKEIKAMVVSLGRLVQNLGSLKNFKQVVKADGDVRLAALIIVGSIPTAVIGLILKNYVHALFSSLVIVGSMLMVTGTFLWLTRHSTPGGKKVEQIGFGTALFIGVCQGVAVIPGISRSGATIAAGLFSGVERETAARYSFLLSMPAIAGAEILSLKESFATGAGFDTVTLLSTLTAFIVGTLALVALLKIVKKGRFYLFAPYCWVVGLISIIAGFVA.

Helical transmembrane passes span M1–V21, A40–F60, V93–L113, L120–L140, I154–I174, F199–A219, V227–L247, and F255–V275.

Belongs to the UppP family.

Its subcellular location is the cell inner membrane. The catalysed reaction is di-trans,octa-cis-undecaprenyl diphosphate + H2O = di-trans,octa-cis-undecaprenyl phosphate + phosphate + H(+). Catalyzes the dephosphorylation of undecaprenyl diphosphate (UPP). Confers resistance to bacitracin. In Desulforapulum autotrophicum (strain ATCC 43914 / DSM 3382 / VKM B-1955 / HRM2) (Desulfobacterium autotrophicum), this protein is Undecaprenyl-diphosphatase.